Reading from the N-terminus, the 52-residue chain is Large ribosomal subunit protein eL39 (52 aa).

Belongs to the eukaryotic ribosomal protein eL39 family.

This chain is Large ribosomal subunit protein eL39 (RPL39), found in Tetrahymena thermophila (strain SB210).